The following is a 777-amino-acid chain: uncharacterized protein (777 aa).

8 disordered regions span residues 1-101 (MNNN…NLSN), 128-150 (SYNNNNNNNNNNKNNNNNINDDN), 219-267 (HHIH…NNMN), 334-366 (SLPFSSLSDNNGDDDDDGIDDGIDDGIDDGIDD), 391-466 (ISNS…ATIS), 529-577 (KNLN…NNKG), 590-622 (LAQEPNDEQNKTKKELEEVKEEEEEEEEEISTI), and 713-751 (EKQGGDDPEDSSDSDSDSDSNSNSDSSDLGNITVRKWKP). Low complexity-rich tracts occupy residues 128-147 (SYNNNNNNNNNNKNNNNNIN) and 243-265 (NNNNNNNNNNNNNNNNNINNHNN). Over residues 334–343 (SLPFSSLSDN) the composition is skewed to polar residues. Residues 344–366 (NGDDDDDGIDDGIDDGIDDGIDD) are compositionally biased toward acidic residues. Residues 391–407 (ISNSFHQNQSPCNNSFK) show a composition bias toward polar residues. Low complexity-rich tracts occupy residues 408-466 (NNNN…ATIS) and 532-574 (NNNN…NNKN). The span at 597 to 606 (EQNKTKKELE) shows a compositional bias: basic and acidic residues. Acidic residues-rich tracts occupy residues 607-620 (EVKEEEEEEEEEIS) and 718-730 (DDPEDSSDSDSDS). Positions 731 to 740 (DSNSNSDSSD) are enriched in low complexity.

This is an uncharacterized protein from Dictyostelium discoideum (Social amoeba).